A 136-amino-acid polypeptide reads, in one-letter code: Small ribosomal subunit protein uS9 (136 aa).

The disordered stretch occupies residues 111-136 (DARRTEPHKPSRSTKGPRAKRQKSYR). Over residues 120–136 (PSRSTKGPRAKRQKSYR) the composition is skewed to basic residues.

Belongs to the universal ribosomal protein uS9 family.

This is Small ribosomal subunit protein uS9 (rps9) from Methanocaldococcus jannaschii (strain ATCC 43067 / DSM 2661 / JAL-1 / JCM 10045 / NBRC 100440) (Methanococcus jannaschii).